Here is a 406-residue protein sequence, read N- to C-terminus: Mitochondrial ribosome-associated GTPase 2 (406 aa).

Residues F15–W406 form a localized in the mitochondria region. The interval K30–W406 is not localized in the mitochondria. One can recognise an Obg domain in the interval R70–V224. One can recognise an OBG-type G domain in the interval A225–D390. GTP contacts are provided by residues G231 to S238, F256 to K260, D278 to G281, N345 to D348, and S371 to L373. Mg(2+) contacts are provided by S238 and T258.

This sequence belongs to the TRAFAC class OBG-HflX-like GTPase superfamily. OBG GTPase family. As to quaternary structure, associates with the mitochondrial ribosome large subunit; the association occurs in a GTP-dependent manner. The cofactor is Mg(2+).

Its subcellular location is the mitochondrion. It is found in the mitochondrion inner membrane. Functionally, plays a role in the regulation of the mitochondrial ribosome assembly and of translational activity. Displays GTPase activity. Involved in the ribosome maturation process. In Homo sapiens (Human), this protein is Mitochondrial ribosome-associated GTPase 2 (MTG2).